The primary structure comprises 120 residues: MANPHQIYRHDAAWDRQVFRSLATSLILHGHIKTTLDRAKRLRSVVEKIITKAKKNDLAARRQILSFLYAQKTKAGIKVMPYLFNKVAPRYQERNGGYTRIVRIPSRLGDNSKMAIIELV.

The protein belongs to the bacterial ribosomal protein bL17 family. In terms of assembly, part of the 50S ribosomal subunit. Contacts protein L32.

In Mesomycoplasma hyopneumoniae (strain 232) (Mycoplasma hyopneumoniae), this protein is Large ribosomal subunit protein bL17.